Here is a 538-residue protein sequence, read N- to C-terminus: Beta-1,4-mannosyl-glycoprotein 4-beta-N-acetylglucosaminyltransferase (538 aa).

The Cytoplasmic portion of the chain corresponds to 1 to 7; sequence MKMRRYK. A helical; Signal-anchor for type II membrane protein membrane pass occupies residues 8 to 23; that stretch reads LFLMFCMAGLCLISFL. Topologically, residues 24–538 are lumenal; that stretch reads HFFKTLSYVT…VRGKLDTAEG (515 aa). The interval 120–161 is disordered; that stretch reads PGTRMLEKPSPGRTEEKTEVSEGSSARGPARRPMRHVLSSRE. Asn-245, Asn-263, and Asn-401 each carry an N-linked (GlcNAc...) asparagine glycan. Residues 507–538 form a disordered region; sequence REPKSTVEGGRQNQGSDGRSSAVRGKLDTAEG.

The protein belongs to the glycosyltransferase 17 family. In terms of assembly, interacts with MGAT4D. Highly expressed in brain and kidney and to a much lesser extent in stomach, heart, intestine, uterus, testis, ovary and lung. Not present in spleen, liver and muscle. In brain, expressed in neurons of hippocampus.

Its subcellular location is the golgi apparatus membrane. The enzyme catalyses N(4)-{beta-D-GlcNAc-(1-&gt;2)-alpha-D-Man-(1-&gt;3)-[beta-D-GlcNAc-(1-&gt;2)-alpha-D-Man-(1-&gt;6)]-beta-D-Man-(1-&gt;4)-beta-D-GlcNAc-(1-&gt;4)-beta-D-GlcNAc}-L-asparaginyl-[protein] + UDP-N-acetyl-alpha-D-glucosamine = N(4)-{beta-D-GlcNAc-(1-&gt;2)-alpha-D-Man-(1-&gt;3)-[beta-D-GlcNAc-(1-&gt;4)]-[beta-D-GlcNAc-(1-&gt;2)-alpha-D-Man-(1-&gt;6)]-beta-D-Man-(1-&gt;4)-beta-D-GlcNAc-(1-&gt;4)-beta-D-GlcNAc}-L-asparaginyl-[protein] + UDP + H(+). It functions in the pathway protein modification; protein glycosylation. Its function is as follows. It is involved in the regulation of the biosynthesis and biological function of glycoprotein oligosaccharides. Catalyzes the addition of N-acetylglucosamine in beta 1-4 linkage to the beta-linked mannose of the trimannosyl core of N-linked sugar chains, called bisecting N-acetylglucosamine (GlcNAc). It is one of the most important enzymes involved in the regulation of the biosynthesis of glycoprotein oligosaccharides. The addition of this bisecting GlcNAc residue alters not only the composition, but also the conformation of the N-glycan. The introduction of the bisecting GlcNAc residue results in the suppression of further processing and elongation of N-glycans, precluding the formation of beta-1,6 GlcNAc branching, catalyzed by MGAT5 since it is unable to use the bisected oligosaccharide as a substrate. Addition of bisecting N-acetylglucosamine to CDH1/E-cadherin modulates CDH1 cell membrane location. Inhibits NeuAc-alpha-2,3-Gal-beta-1,4-GlcNAc- formation which modulates sialylation levels and plays a role in cell migration regulation. In brain, addition of bisecting N-acetylglucosamine to BACE1 blocks its lysosomal targeting in response to oxidative stress and further degradation which increases its location to early endosome and the APP cleavage. This Mus musculus (Mouse) protein is Beta-1,4-mannosyl-glycoprotein 4-beta-N-acetylglucosaminyltransferase.